We begin with the raw amino-acid sequence, 210 residues long: Large ribosomal subunit protein uL3 (210 aa).

A disordered region spans residues 120-143 (FQGNIKKDGQSRGPMGHGSRYHRR).

The protein belongs to the universal ribosomal protein uL3 family. Part of the 50S ribosomal subunit. Forms a cluster with proteins L14 and L19.

One of the primary rRNA binding proteins, it binds directly near the 3'-end of the 23S rRNA, where it nucleates assembly of the 50S subunit. In Latilactobacillus sakei subsp. sakei (strain 23K) (Lactobacillus sakei subsp. sakei), this protein is Large ribosomal subunit protein uL3.